We begin with the raw amino-acid sequence, 222 residues long: N-acetyltransferase 8B (222 aa).

At 1–42 (MVSYHICEYQDSDYKSVVDVFTKGAEEYIPSTFRHLLLLPRT) the chain is on the cytoplasmic side. Residues 43-67 (LLLLLGVSLALVLVSGSWLLAVVCI) form a helical; Signal-anchor for type II membrane protein membrane-spanning segment. The region spanning 62–217 (LAVVCIFFLL…VGIRFVQLNY (156 aa)) is the N-acetyltransferase domain. Residues 68-222 (FFLLPFLWFL…VQLNYSFPSA (155 aa)) are Lumenal-facing. Lysine 99 is modified (N6-acetyllysine).

This sequence belongs to the NAT8 family. In terms of processing, acetylation on Lys-99 modulates enzymatic activity.

Its subcellular location is the endoplasmic reticulum-Golgi intermediate compartment membrane. It is found in the endoplasmic reticulum membrane. The enzyme catalyses L-lysyl-[protein] + acetyl-CoA = N(6)-acetyl-L-lysyl-[protein] + CoA + H(+). Endoplasmic reticulum (ER)-membrane-bound lysine N-acetyltransferase catalyzing the N6-acetylation of lysine residues in the lumen of the ER in various proteins, including PROM1 and BACE1, using acetyl-CoA as acetyl donor. Thereby, may regulate apoptosis through the acetylation and the regulation of the expression of PROM1. Acetylates and stabilizes BACE1 immature protein, leading to increased steady-state levels in neurons. By acting on BACE1 expression, may regulate amyloid beta-peptide formation. N(6)-lysine acetylation in ER maintains protein homeostasis and regulates reticulophagy. In Rattus norvegicus (Rat), this protein is N-acetyltransferase 8B.